The primary structure comprises 1402 residues: Transcription factor SPT20 homolog (1402 aa).

Disordered stretches follow at residues 1-29 (MNGN…EQEQ), 60-107 (VNSL…LDTD), 114-133 (NNDS…SSSS), 177-206 (QTTL…NNIL), 786-817 (APST…PTPV), 1136-1174 (PQQI…QYQT), and 1199-1250 (QPLQ…PPQI). Residues 7–29 (VHTEENKNEHQQEGKGGEQEQEQ) show a composition bias toward basic and acidic residues. The span at 60-72 (VNSLSEPTPNEQQ) shows a compositional bias: polar residues. Residues 73–102 (NNNNNNNSNGNGNGNDETTSSKTTTIINSN) show a composition bias toward low complexity. Composition is skewed to low complexity over residues 183-204 (NNNN…NNNN), 786-812 (APST…TTPT), 1136-1150 (PQQI…PPNQ), 1157-1174 (SPQS…QYQT), 1199-1218 (QPLQ…QQQQ), and 1226-1250 (PQQF…PPQI).

The protein belongs to the SPT20 family.

The polypeptide is Transcription factor SPT20 homolog (Dictyostelium discoideum (Social amoeba)).